A 513-amino-acid polypeptide reads, in one-letter code: Protein phosphatase 1H (513 aa).

A Phosphoserine modification is found at serine 7. In terms of domain architecture, PPM-type phosphatase spans 77–506 (ATGYAEVINA…DDISVYVIPL (430 aa)). Positions 110-133 (ITSTPNRNSKRRSSLPNGEGLQLK) are disordered. Position 113 is a phosphothreonine (threonine 113). Serine 123 and serine 210 each carry phosphoserine. Position 212 is an omega-N-methylarginine (arginine 212). The residue at position 220 (serine 220) is a Phosphoserine. A Phosphothreonine modification is found at threonine 223. A Phosphoserine modification is found at serine 421.

It belongs to the PP2C family.

It localises to the nucleus. Its subcellular location is the cytoplasm. It carries out the reaction O-phospho-L-seryl-[protein] + H2O = L-seryl-[protein] + phosphate. The enzyme catalyses O-phospho-L-threonyl-[protein] + H2O = L-threonyl-[protein] + phosphate. Dephosphorylates CDKN1B at 'Thr-187', thus removing a signal for proteasomal degradation. The polypeptide is Protein phosphatase 1H (Ppm1h) (Rattus norvegicus (Rat)).